The primary structure comprises 397 residues: Acetate kinase (397 aa).

Asparagine 8 contacts Mg(2+). Position 15 (lysine 15) interacts with ATP. Arginine 92 is a binding site for substrate. Catalysis depends on aspartate 149, which acts as the Proton donor/acceptor. Residues 209-213, 283-285, and 331-335 contribute to the ATP site; these read HLGNG, DFR, and GVGEN. Glutamate 385 lines the Mg(2+) pocket.

It belongs to the acetokinase family. As to quaternary structure, homodimer. The cofactor is Mg(2+). Mn(2+) is required as a cofactor.

Its subcellular location is the cytoplasm. It carries out the reaction acetate + ATP = acetyl phosphate + ADP. It participates in metabolic intermediate biosynthesis; acetyl-CoA biosynthesis; acetyl-CoA from acetate: step 1/2. Catalyzes the formation of acetyl phosphate from acetate and ATP. Can also catalyze the reverse reaction. This Corynebacterium glutamicum (strain R) protein is Acetate kinase.